The sequence spans 333 residues: MSLHLSNVILHQLSKNDQDELMVNYRSESLVNDSSTENLVAELHRVFHSKAGKGFGCFQSDSEFQIWLNELQRGELNFYDFSQKCAVRLKEELAKYPFADEGILVFAEYQSLATDYLFVGILPLNQSLKVTEGLDISATDYLDINKMDIAARIDLSVYEADKESNRYLSYIKGRVGRKVADFFLDFLQAEVGLDSKQQNQVLMQALDDFCTDAKLEKQEVNEYKKQVYEYCNGQIKAGEEVEIRELSGELPPSPSGASFLEFTQEQGYGLEESFPADRGLVRKLTKYVGAGGGLNVSFDSLLLGERIFYDPETDTLTIKGTPPNLRDQLTRNR.

This sequence belongs to the YejK family.

The protein localises to the cytoplasm. It localises to the nucleoid. The chain is Nucleoid-associated protein VV1_3120 from Vibrio vulnificus (strain CMCP6).